Consider the following 143-residue polypeptide: Nucleoside diphosphate kinase (143 aa).

Residues Lys11, Phe59, Arg87, Thr93, Arg104, and Asn114 each contribute to the ATP site. The active-site Pros-phosphohistidine intermediate is the His117.

It belongs to the NDK family. As to quaternary structure, homotetramer. The cofactor is Mg(2+).

The protein resides in the cytoplasm. The enzyme catalyses a 2'-deoxyribonucleoside 5'-diphosphate + ATP = a 2'-deoxyribonucleoside 5'-triphosphate + ADP. It catalyses the reaction a ribonucleoside 5'-diphosphate + ATP = a ribonucleoside 5'-triphosphate + ADP. In terms of biological role, major role in the synthesis of nucleoside triphosphates other than ATP. The ATP gamma phosphate is transferred to the NDP beta phosphate via a ping-pong mechanism, using a phosphorylated active-site intermediate. This Salmonella agona (strain SL483) protein is Nucleoside diphosphate kinase.